The following is a 367-amino-acid chain: Homoserine O-acetyltransferase (367 aa).

An AB hydrolase-1 domain is found at 41 to 339 (NLIVLEHALT…PVGHDAFLTE (299 aa)). Serine 136 functions as the Nucleophile in the catalytic mechanism. Arginine 205 is a binding site for substrate. Residues aspartate 303 and histidine 333 contribute to the active site. Residue aspartate 334 coordinates substrate.

The protein belongs to the AB hydrolase superfamily. MetX family. In terms of assembly, homodimer.

The protein resides in the cytoplasm. It carries out the reaction L-homoserine + acetyl-CoA = O-acetyl-L-homoserine + CoA. The protein operates within amino-acid biosynthesis; L-methionine biosynthesis via de novo pathway; O-acetyl-L-homoserine from L-homoserine: step 1/1. Its function is as follows. Transfers an acetyl group from acetyl-CoA to L-homoserine, forming acetyl-L-homoserine. In Corynebacterium diphtheriae (strain ATCC 700971 / NCTC 13129 / Biotype gravis), this protein is Homoserine O-acetyltransferase.